Here is a 116-residue protein sequence, read N- to C-terminus: Spermadhesin Z13 (116 aa).

Cystine bridges form between Cys-14–Cys-35 and Cys-58–Cys-79. A CUB domain is found at Cys-14–Val-115.

The protein belongs to the spermadhesin family. As to quaternary structure, homodimer; disulfide-linked. Seminal plasma.

The protein localises to the secreted. Functionally, may be involved in the fertilization process. The polypeptide is Spermadhesin Z13 (Bos taurus (Bovine)).